A 565-amino-acid polypeptide reads, in one-letter code: Nephronectin (565 aa).

The first 19 residues, 1–19 (MDFLLALVLVSSLYLQAAA), serve as a signal peptide directing secretion. In terms of domain architecture, EGF-like 1 spans 52–87 (SWGQCQPVCQPRCKHGECIGPNKCKCHPGYAGKTCN). Disulfide bonds link Cys-56/Cys-69, Cys-60/Cys-75, Cys-77/Cys-86, Cys-93/Cys-104, Cys-100/Cys-113, and Cys-115/Cys-127. In terms of domain architecture, EGF-like 2; calcium-binding spans 89-128 (DLNECGLKPRPCKHRCMNTYGSYKCYCLNGYMLMPDGSCS). The EGF-like 3 domain maps to 132 to 168 (TCSMANCQYGCDVVKGQIRCQCPSPGLQLAPDGRTCV). The EGF-like 4; calcium-binding domain occupies 169 to 213 (DVDECATGRASCPRFRQCVNTFGSYICKCHKGFDLMYIGGKYQCH). Disulfide bonds link Cys-173/Cys-186, Cys-180/Cys-195, Cys-197/Cys-212, Cys-218/Cys-231, Cys-225/Cys-240, and Cys-242/Cys-253. Positions 214 to 254 (DIDECSLGQYQCSSFARCYNIRGSYKCKCKEGYQGDGLTCV) constitute an EGF-like 5; calcium-binding domain. The segment at 301–389 (YIPPIITNRP…KPRGDVFIPR (89 aa)) is disordered. Residues 304–316 (PIITNRPTSKPTT) show a composition bias toward low complexity. A compositionally biased stretch (pro residues) spans 317–347 (RPTPKPTPIPTPPPPPPLPTELRTPLPPTTP). An Integrin interaction motif is present at residues 382–384 (RGD). The region spanning 420–563 (HSCNFDHGLC…VSLKKGHCSE (144 aa)) is the MAM domain.

It belongs to the nephronectin family. In terms of assembly, homodimer and homotrimer. Expressed in kidney and lung and to a lower extent in brain, pregnant uterus, placenta, thyroid gland and blood vessels.

The protein localises to the secreted. It localises to the extracellular space. Its subcellular location is the extracellular matrix. Functionally, functional ligand of integrin alpha-8/beta-1 in kidney development. Regulates the expression of GDNF with integrin alpha-8/beta-1 which is essential for kidney development. May also play a role in the development and function of various tissues, regulating cell adhesion, spreading and survival through the binding of several integrins. This chain is Nephronectin (NPNT), found in Homo sapiens (Human).